The sequence spans 496 residues: Serine/threonine-protein kinase Sgk3 (496 aa).

One can recognise a PX domain in the interval 12 to 124; sequence SCPSVSIPSS…AFLQMDSPRH (113 aa). Positions 121 to 157 are disordered; that stretch reads SPRHQSDPSEDEDERSTPKPHSTSRNINLGPTGNPHA. Phosphoserine is present on residues Ser126 and Ser129. The segment covering 139–151 has biased composition (polar residues); the sequence is KPHSTSRNINLGP. Positions 162 to 464 constitute a Protein kinase domain; sequence FDFLKVIGKG…EETVPYSVCV (303 aa). Residues 168–176 and Lys191 contribute to the ATP site; that span reads IGKGSFGKV. Positions 195 to 205 match the Nuclear localization signal motif; the sequence is KKIVLNRKEQK. Asp286 acts as the Proton acceptor in catalysis. Position 320 is a phosphothreonine; by PDPK1 (Thr320). Residues 420–496 form the AGC-kinase C-terminal domain; it reads ESLSWTDLVQ…YAPPSEDLFL (77 aa). Ser486 carries the post-translational modification Phosphoserine.

Belongs to the protein kinase superfamily. AGC Ser/Thr protein kinase family. As to quaternary structure, interacts with GSK3B and FLII. Interacts with PDPK1 in a phosphorylation-dependent manner. Activated by phosphorylation on Ser-486 by an unknown kinase (may be mTORC2 but not confirmed), transforming it into a substrate for PDPK1 which then phosphorylates it on Thr-320.

It localises to the cytoplasmic vesicle. The protein resides in the early endosome. The protein localises to the recycling endosome. It carries out the reaction L-seryl-[protein] + ATP = O-phospho-L-seryl-[protein] + ADP + H(+). It catalyses the reaction L-threonyl-[protein] + ATP = O-phospho-L-threonyl-[protein] + ADP + H(+). Two specific sites, one in the kinase domain (Thr-320) and the other in the C-terminal regulatory region (Ser-486), need to be phosphorylated for its full activation. In terms of biological role, serine/threonine-protein kinase which is involved in the regulation of a wide variety of ion channels, membrane transporters, cell growth, proliferation, survival and migration. Up-regulates Na(+) channels: SCNN1A/ENAC and SCN5A, K(+) channels: KCNA3/KV1.3, KCNE1, KCNQ1 and KCNH2/HERG, epithelial Ca(2+) channels: TRPV5 and TRPV6, chloride channel: BSND, creatine transporter: SLC6A8, Na(+)/dicarboxylate cotransporter: SLC13A2/NADC1, Na(+)-dependent phosphate cotransporter: SLC34A2/NAPI-2B, amino acid transporters: SLC1A5/ASCT2 and SLC6A19, glutamate transporters: SLC1A3/EAAT1, SLC1A6/EAAT4 and SLC1A7/EAAT5, glutamate receptors: GRIA1/GLUR1 and GRIK2/GLUR6, Na(+)/H(+) exchanger: SLC9A3/NHE3, and the Na(+)/K(+) ATPase. Plays a role in the regulation of renal tubular phosphate transport and bone density. Phosphorylates NEDD4L and GSK3B. Positively regulates ER transcription activity through phosphorylation of FLII. Negatively regulates the function of ITCH/AIP4 via its phosphorylation and thereby prevents CXCR4 from being efficiently sorted to lysosomes. The protein is Serine/threonine-protein kinase Sgk3 (Sgk3) of Rattus norvegicus (Rat).